Consider the following 401-residue polypeptide: 1-deoxy-D-xylulose 5-phosphate reductoisomerase (401 aa).

NADPH-binding residues include threonine 11, glycine 12, serine 13, isoleucine 14, arginine 38, asparagine 39, and asparagine 125. Lysine 126 provides a ligand contact to 1-deoxy-D-xylulose 5-phosphate. Position 127 (glutamate 127) interacts with NADPH. Residue aspartate 151 participates in Mn(2+) binding. 1-deoxy-D-xylulose 5-phosphate-binding residues include serine 152, glutamate 153, serine 179, and histidine 202. Glutamate 153 is a binding site for Mn(2+). Glycine 208 contacts NADPH. 1-deoxy-D-xylulose 5-phosphate is bound by residues serine 215, asparagine 220, lysine 221, and glutamate 224. Position 224 (glutamate 224) interacts with Mn(2+).

Belongs to the DXR family. It depends on Mg(2+) as a cofactor. Mn(2+) serves as cofactor.

The enzyme catalyses 2-C-methyl-D-erythritol 4-phosphate + NADP(+) = 1-deoxy-D-xylulose 5-phosphate + NADPH + H(+). The protein operates within isoprenoid biosynthesis; isopentenyl diphosphate biosynthesis via DXP pathway; isopentenyl diphosphate from 1-deoxy-D-xylulose 5-phosphate: step 1/6. Its function is as follows. Catalyzes the NADPH-dependent rearrangement and reduction of 1-deoxy-D-xylulose-5-phosphate (DXP) to 2-C-methyl-D-erythritol 4-phosphate (MEP). The polypeptide is 1-deoxy-D-xylulose 5-phosphate reductoisomerase (Paraburkholderia xenovorans (strain LB400)).